A 170-amino-acid chain; its full sequence is uncharacterized protein (170 aa).

A helical transmembrane segment spans residues 7-27; sequence LVELLIGLAIISIALNFAVPL.

The protein localises to the membrane. This is an uncharacterized protein from Haemophilus influenzae (strain ATCC 51907 / DSM 11121 / KW20 / Rd).